A 260-amino-acid chain; its full sequence is Hydroxyethylthiazole kinase (260 aa).

Met38 lines the substrate pocket. Positions 114 and 159 each coordinate ATP. Residue Gly186 coordinates substrate.

Belongs to the Thz kinase family. The cofactor is Mg(2+).

It carries out the reaction 5-(2-hydroxyethyl)-4-methylthiazole + ATP = 4-methyl-5-(2-phosphooxyethyl)-thiazole + ADP + H(+). It functions in the pathway cofactor biosynthesis; thiamine diphosphate biosynthesis; 4-methyl-5-(2-phosphoethyl)-thiazole from 5-(2-hydroxyethyl)-4-methylthiazole: step 1/1. Functionally, catalyzes the phosphorylation of the hydroxyl group of 4-methyl-5-beta-hydroxyethylthiazole (THZ). This is Hydroxyethylthiazole kinase from Helicobacter pylori (strain HPAG1).